Consider the following 396-residue polypeptide: Serpin-ZXA (396 aa).

Residues 343–367 (GTEAAAATAAVITLRSAPIAEDFVA) form an RCL region.

It belongs to the serpin family.

Probable serine protease inhibitor. This is Serpin-ZXA from Oryza sativa subsp. japonica (Rice).